Here is a 347-residue protein sequence, read N- to C-terminus: 5-deoxyribose 1-phosphate isomerase (347 aa).

Substrate contacts are provided by residues 48-50 (RGA), Arg91, and Gln198. The Proton donor role is filled by Asp239. 249–250 (NK) serves as a coordination point for substrate.

Belongs to the EIF-2B alpha/beta/delta subunits family. DrdI subfamily.

It catalyses the reaction 5-deoxy-alpha-D-ribose 1-phosphate = 5-deoxy-D-ribulose 1-phosphate. It functions in the pathway carbohydrate degradation. In terms of biological role, catalyzes the isomerization of 5-deoxy-alpha-D-ribose 1-phosphate to 5-deoxy-D-ribulose 1-phosphate, as part of a 5-deoxyribose salvage pathway that recycles this toxic radical SAM enzyme by-product to mainstream metabolites. This chain is 5-deoxyribose 1-phosphate isomerase, found in Bacillus thuringiensis (strain Al Hakam).